A 221-amino-acid chain; its full sequence is Large ribosomal subunit protein uL4 (221 aa).

The interval 46 to 74 (AGTASTKTRSEVSGGGRKPWPQKHTGRAR) is disordered.

This sequence belongs to the universal ribosomal protein uL4 family. Part of the 50S ribosomal subunit.

Functionally, one of the primary rRNA binding proteins, this protein initially binds near the 5'-end of the 23S rRNA. It is important during the early stages of 50S assembly. It makes multiple contacts with different domains of the 23S rRNA in the assembled 50S subunit and ribosome. Forms part of the polypeptide exit tunnel. The chain is Large ribosomal subunit protein uL4 from Petrotoga mobilis (strain DSM 10674 / SJ95).